Here is a 237-residue protein sequence, read N- to C-terminus: NAD(P)H-quinone oxidoreductase subunit K, chloroplastic (237 aa).

Residues cysteine 55, cysteine 56, cysteine 120, and cysteine 151 each contribute to the [4Fe-4S] cluster site.

It belongs to the complex I 20 kDa subunit family. In terms of assembly, NDH is composed of at least 16 different subunits, 5 of which are encoded in the nucleus. [4Fe-4S] cluster serves as cofactor.

The protein resides in the plastid. It localises to the chloroplast thylakoid membrane. It catalyses the reaction a plastoquinone + NADH + (n+1) H(+)(in) = a plastoquinol + NAD(+) + n H(+)(out). The catalysed reaction is a plastoquinone + NADPH + (n+1) H(+)(in) = a plastoquinol + NADP(+) + n H(+)(out). In terms of biological role, NDH shuttles electrons from NAD(P)H:plastoquinone, via FMN and iron-sulfur (Fe-S) centers, to quinones in the photosynthetic chain and possibly in a chloroplast respiratory chain. The immediate electron acceptor for the enzyme in this species is believed to be plastoquinone. Couples the redox reaction to proton translocation, and thus conserves the redox energy in a proton gradient. This is NAD(P)H-quinone oxidoreductase subunit K, chloroplastic from Nephroselmis olivacea (Green alga).